Consider the following 1111-residue polypeptide: uncharacterized protein (1111 aa).

Residues 1-31 (MIRKLMKIPPFFTALFASAMFTLSVSQGVLA) form the signal peptide. The next 11 helical transmembrane spans lie at 490–510 (LPYL…IFKF), 538–558 (LALL…LAVC), 572–592 (FWHW…WISL), 620–640 (IIVV…TDAG), 644–664 (DVLG…IIAP), 694–714 (IPVG…LNLI), 797–817 (FIWT…VTVV), 840–860 (SITL…YVLV), 885–905 (ITTL…FATL), 922–942 (GLGF…ILLF), and 1003–1023 (LVIS…QLLL).

The protein belongs to the MscS (TC 1.A.23) family.

Its subcellular location is the cell membrane. This is an uncharacterized protein from Haemophilus influenzae (strain ATCC 51907 / DSM 11121 / KW20 / Rd).